The primary structure comprises 470 residues: Solute carrier family 7 member 13 (470 aa).

Over 1-11 (MDRGEKIQLKR) the chain is Cytoplasmic. A helical transmembrane segment spans residues 12–32 (VFGYWWGTSFLLINIIGAGIF). At 33–45 (VSPKGVLAYSCMN) the chain is on the extracellular side. A helical transmembrane segment spans residues 46–66 (VGVSLCVWAGCAILAMTSTLC). The Cytoplasmic portion of the chain corresponds to 67-87 (SAEISISFPCSGAQYYFLKRY). The helical transmembrane segment at 88–108 (FGSTVAFLNLWTSLFLGSGVV) threads the bilayer. Residues 109–128 (AGQALLLAEYSIQPFFPSCS) lie on the Extracellular side of the membrane. A helical transmembrane segment spans residues 129–149 (VPKLPKKCLALAMLWIVGILT). At 150–162 (SRGVKEVTWLQIA) the chain is on the cytoplasmic side. A helical membrane pass occupies residues 163–183 (SSVLKVSILSFISLTGVVFLI). At 184-206 (RGKKENVERFQNAFDAELPDISH) the chain is on the extracellular side. Residues 207 to 227 (LIQAIFQGYFAYSGGACFTLI) form a helical membrane-spanning segment. Topologically, residues 228–240 (AGELKKPRTTIPK) are cytoplasmic. Residues 241 to 261 (CIFTALPLVTVVYLLVNISYL) traverse the membrane as a helical segment. Residues 262 to 287 (TVLTPREILSSDAVAITWADRAFPSL) are Extracellular-facing. Residues 288-308 (AWIMPFAISTSLFSNLLISIF) form a helical membrane-spanning segment. Over 309–336 (KSSRPIYLASQEGQLPLLFNTLNSHSSP) the chain is Cytoplasmic. Residues 337–357 (FTAVLLLVTLGSLAIILTSLI) form a helical membrane-spanning segment. Residue aspartate 358 is a topological domain, extracellular. A helical transmembrane segment spans residues 359-379 (LINYIFFTGSLWSILLMIGIL). Residues 380–393 (RRRYQEPNLSIPYK) are Cytoplasmic-facing. The helical transmembrane segment at 394 to 414 (VFLSFPLATIVIDVGLVVIPL) threads the bilayer. Residues 415 to 421 (VKSPNVH) lie on the Extracellular side of the membrane. A helical membrane pass occupies residues 422–442 (YVYVLLLVLSGLLFYIPLIHF). Residues 443 to 470 (KIRLAWFEKMTCYLQLLFNICLPDVSEE) are Cytoplasmic-facing.

The protein belongs to the amino acid-polyamine-organocation (APC) superfamily. As to quaternary structure, disulfide-linked heterodimer composed of the catalytic light subunit SLC7A13 and the heavy subunit SLC3A1. As to expression, expressed in the kidney.

The protein resides in the apical cell membrane. It catalyses the reaction L-cystine(out) + L-aspartate(in) = L-cystine(in) + L-aspartate(out). The enzyme catalyses L-cystine(out) = L-cystine(in). It carries out the reaction L-aspartate(in) + L-glutamate(out) = L-aspartate(out) + L-glutamate(in). The catalysed reaction is L-aspartate(in) + L-glutamine(out) = L-aspartate(out) + L-glutamine(in). It catalyses the reaction L-aspartate(in) + L-methionine(out) = L-aspartate(out) + L-methionine(in). The enzyme catalyses L-leucine(out) + L-aspartate(in) = L-leucine(in) + L-aspartate(out). It carries out the reaction L-valine(out) + L-aspartate(in) = L-valine(in) + L-aspartate(out). The catalysed reaction is L-aspartate(in) + L-phenylalanine(out) = L-aspartate(out) + L-phenylalanine(in). It catalyses the reaction L-tyrosine(out) + L-aspartate(in) = L-tyrosine(in) + L-aspartate(out). The enzyme catalyses L-tryptophan(out) + L-aspartate(in) = L-tryptophan(in) + L-aspartate(out). Functionally, associates with SLC3A1/rBAT to form a functional heterodimeric complex that transports anionic and neutral amino acids across the apical plasma membrane of renal epithelium. Preferentially mediates exchange transport, but can also operate via facilitated diffusion. May act as a major transporter for L-cystine in late proximal tubules, ensuring its reabsorption from the luminal fluid in exchange for cytosolic L-glutamate or L-aspartate. This is Solute carrier family 7 member 13 (SLC7A13) from Homo sapiens (Human).